Consider the following 298-residue polypeptide: Nucleotide-binding protein GTNG_3015 (298 aa).

17-24 lines the ATP pocket; sequence GMSGAGKT. A GTP-binding site is contributed by 68 to 71; sequence DLRS.

This sequence belongs to the RapZ-like family.

Its function is as follows. Displays ATPase and GTPase activities. In Geobacillus thermodenitrificans (strain NG80-2), this protein is Nucleotide-binding protein GTNG_3015.